A 293-amino-acid polypeptide reads, in one-letter code: MSSSRYEPSWDVDLAPLLSCKLCLGEFPLEQMTTISQCQCIFCSLCLKQYVELLIKEGLETAISCPDSACPKQGHLLENEIECMVAGEVMQHYKRLQFEREVLLDPCRTWCPSSSCQAVCQLNEAEVQLPQPVQCPECSLRFCSACRADCHTGQACQEMLPITTFLPGENGSNLKSQEDEAPIKRCPKCKVYIERDEGCAQMMCKNCKHAFCWYCLESLDDDFLLIHYDKGPCRNKLGHSRASVIWHRTQVVGIFAGFGLLLLVASPFLLLATPFVLCCKCKCKRGDDDPLPT.

The tract at residues 16 to 237 is TRIAD supradomain; sequence PLLSCKLCLG…YDKGPCRNKL (222 aa). Zn(2+) contacts are provided by Cys-20, Cys-23, Cys-43, Cys-46, Cys-111, Cys-116, Cys-135, Cys-138, Cys-143, Cys-146, His-151, Cys-156, Cys-186, and Cys-189. The RING-type 1 zinc finger occupies 20–70; the sequence is CKLCLGEFPLEQMTTISQCQCIFCSLCLKQYVELLIKEGLETAISCPDSAC. Residues 91-156 form an IBR-type zinc finger; the sequence is QHYKRLQFER…RADCHTGQAC (66 aa). An RING-type 2; atypical zinc finger spans residues 186 to 215; that stretch reads CPKCKVYIERDEGCAQMMCKNCKHAFCWYC. Cys-199 is an active-site residue. 6 residues coordinate Zn(2+): Cys-204, Cys-207, Cys-212, Cys-215, His-227, and Cys-233. A helical membrane pass occupies residues 251–271; the sequence is VVGIFAGFGLLLLVASPFLLL.

It belongs to the RBR family. RNF144 subfamily.

Its subcellular location is the membrane. It carries out the reaction [E2 ubiquitin-conjugating enzyme]-S-ubiquitinyl-L-cysteine + [acceptor protein]-L-lysine = [E2 ubiquitin-conjugating enzyme]-L-cysteine + [acceptor protein]-N(6)-ubiquitinyl-L-lysine.. Its pathway is protein modification; protein ubiquitination. Its function is as follows. E3 ubiquitin-protein ligase which accepts ubiquitin from E2 ubiquitin-conjugating enzymes ube2l3 and ube2l6 in the form of a thioester and then directly transfers the ubiquitin to targeted substrates. This chain is Probable E3 ubiquitin-protein ligase RNF144A-B (rnf144ab), found in Danio rerio (Zebrafish).